The sequence spans 184 residues: Photosystem I assembly protein Ycf4 (184 aa).

2 consecutive transmembrane segments (helical) span residues 22 to 42 (FFWACILFLGSLGFLLVGTSS) and 57 to 77 (ILFFPQGIVMSFYGIAGLFIS).

It belongs to the Ycf4 family.

Its subcellular location is the plastid. It is found in the chloroplast thylakoid membrane. Its function is as follows. Seems to be required for the assembly of the photosystem I complex. This Nandina domestica (Heavenly bamboo) protein is Photosystem I assembly protein Ycf4.